A 208-amino-acid polypeptide reads, in one-letter code: Platelet-activating factor receptor (208 aa).

Residues Met1–Thr16 lie on the Extracellular side of the membrane. Residues Leu17 to Trp38 traverse the membrane as a helical segment. Topologically, residues Val39–Ile54 are cytoplasmic. The chain crosses the membrane as a helical span at residues Phe55–Ile74. Residues Val75–Asn91 lie on the Extracellular side of the membrane. A disulfide bond links Cys90 and Cys173. A helical membrane pass occupies residues Leu92–Tyr113. Residues Asn114–Arg133 are Cytoplasmic-facing. A helical transmembrane segment spans residues Gly134 to Leu155. The Extracellular portion of the chain corresponds to Asp156–Val184. Residue Asn169 is glycosylated (N-linked (GlcNAc...) asparagine). The chain crosses the membrane as a helical span at residues Leu185 to Cys205. Topologically, residues Asn206–Val208 are cytoplasmic.

This sequence belongs to the G-protein coupled receptor 1 family. Interacts with ARRB1.

It is found in the cell membrane. Functionally, receptor for platelet activating factor, a chemotactic phospholipid mediator that possesses potent inflammatory, smooth-muscle contractile and hypotensive activity. Seems to mediate its action via a G protein that activates a phosphatidylinositol-calcium second messenger system. The chain is Platelet-activating factor receptor (PTAFR) from Macaca mulatta (Rhesus macaque).